A 315-amino-acid chain; its full sequence is Ribosomal RNA small subunit methyltransferase H (315 aa).

Residues 33–35 (GGH), Asp-52, Phe-84, Asp-106, and Gln-113 each bind S-adenosyl-L-methionine. The disordered stretch occupies residues 294–315 (SSDELEENNRSHSAKLRVAEKL).

The protein belongs to the methyltransferase superfamily. RsmH family.

It is found in the cytoplasm. It carries out the reaction cytidine(1402) in 16S rRNA + S-adenosyl-L-methionine = N(4)-methylcytidine(1402) in 16S rRNA + S-adenosyl-L-homocysteine + H(+). Specifically methylates the N4 position of cytidine in position 1402 (C1402) of 16S rRNA. This Lactobacillus johnsonii (strain CNCM I-12250 / La1 / NCC 533) protein is Ribosomal RNA small subunit methyltransferase H.